The primary structure comprises 266 residues: Putative pyruvate, phosphate dikinase regulatory protein (266 aa).

149–156 serves as a coordination point for ADP; the sequence is GVSRTSKT.

It belongs to the pyruvate, phosphate/water dikinase regulatory protein family. PDRP subfamily.

The catalysed reaction is N(tele)-phospho-L-histidyl/L-threonyl-[pyruvate, phosphate dikinase] + ADP = N(tele)-phospho-L-histidyl/O-phospho-L-threonyl-[pyruvate, phosphate dikinase] + AMP + H(+). It carries out the reaction N(tele)-phospho-L-histidyl/O-phospho-L-threonyl-[pyruvate, phosphate dikinase] + phosphate + H(+) = N(tele)-phospho-L-histidyl/L-threonyl-[pyruvate, phosphate dikinase] + diphosphate. Functionally, bifunctional serine/threonine kinase and phosphorylase involved in the regulation of the pyruvate, phosphate dikinase (PPDK) by catalyzing its phosphorylation/dephosphorylation. This Geobacillus sp. (strain WCH70) protein is Putative pyruvate, phosphate dikinase regulatory protein.